Reading from the N-terminus, the 192-residue chain is Erythropoietin (192 aa).

The signal sequence occupies residues 1–26 (MGVPERPTLLLLLSLLLLPLGLPVLC). Residues Cys-33 and Cys-187 are joined by a disulfide bond. N-linked (GlcNAc...) asparagine glycosylation is found at Asn-50, Asn-64, and Asn-109.

Belongs to the EPO/TPO family. In terms of tissue distribution, produced by kidney or liver of adult mammals and by liver of fetal or neonatal mammals.

The protein resides in the secreted. Functionally, hormone involved in the regulation of erythrocyte proliferation and differentiation and the maintenance of a physiological level of circulating erythrocyte mass. Binds to EPOR leading to EPOR dimerization and JAK2 activation thereby activating specific downstream effectors, including STAT1 and STAT3. The protein is Erythropoietin (EPO) of Alexandromys oeconomus (Tundra vole).